Here is a 174-residue protein sequence, read N- to C-terminus: Imidazole glycerol phosphate synthase subunit HisH (174 aa).

In terms of domain architecture, Glutamine amidotransferase type-1 spans 2-174 (SVVIINTGCA…AAVNKDNFWR (173 aa)). Cys77 functions as the Nucleophile in the catalytic mechanism.

Heterodimer of HisH and HisF.

It localises to the cytoplasm. It carries out the reaction 5-[(5-phospho-1-deoxy-D-ribulos-1-ylimino)methylamino]-1-(5-phospho-beta-D-ribosyl)imidazole-4-carboxamide + L-glutamine = D-erythro-1-(imidazol-4-yl)glycerol 3-phosphate + 5-amino-1-(5-phospho-beta-D-ribosyl)imidazole-4-carboxamide + L-glutamate + H(+). The catalysed reaction is L-glutamine + H2O = L-glutamate + NH4(+). The protein operates within amino-acid biosynthesis; L-histidine biosynthesis; L-histidine from 5-phospho-alpha-D-ribose 1-diphosphate: step 5/9. Functionally, IGPS catalyzes the conversion of PRFAR and glutamine to IGP, AICAR and glutamate. The HisH subunit catalyzes the hydrolysis of glutamine to glutamate and ammonia as part of the synthesis of IGP and AICAR. The resulting ammonia molecule is channeled to the active site of HisF. This chain is Imidazole glycerol phosphate synthase subunit HisH (hisH), found in Buchnera aphidicola subsp. Schlechtendalia chinensis.